Here is a 589-residue protein sequence, read N- to C-terminus: Protein NRT1/ PTR FAMILY 7.2 (589 aa).

2 consecutive transmembrane segments (helical) span residues 32-52 (WLTA…FFGV) and 78-98 (WTGT…SYWG). Thr102 carries the post-translational modification Phosphothreonine. 10 consecutive transmembrane segments (helical) span residues 105–125 (IFQA…GALL), 147–167 (VLFY…QPNI), 187–207 (IAFF…SNTV), 217–237 (WPLG…LFLI), 343–363 (IWLC…LFVV), 377–397 (IPAS…IFAY), 423–443 (MGIG…VEIH), 464–484 (IFWQ…MYVG), 504–524 (LCMA…SIVM), and 548–568 (FYFL…ICAK).

This sequence belongs to the major facilitator superfamily. Proton-dependent oligopeptide transporter (POT/PTR) (TC 2.A.17) family. As to expression, expressed in xylem parenchyma cells within the vasculature. Expressed in siliques and flowers. Higher expression in shoots than in roots.

The protein localises to the cell membrane. In terms of biological role, low-affinity nitrate transporter. Involved in nitrate removal from xylem sap. Not involved in oligopeptides transport. The protein is Protein NRT1/ PTR FAMILY 7.2 (NPF7.2) of Arabidopsis thaliana (Mouse-ear cress).